A 321-amino-acid chain; its full sequence is Polyamine aminopropyltransferase (321 aa).

One can recognise a PABS domain in the interval His-23 to Asp-256. Gln-53 is a binding site for S-methyl-5'-thioadenosine. Positions 84 and 108 each coordinate spermidine. S-methyl-5'-thioadenosine-binding positions include Glu-127 and Asp-159–Gly-160. The Proton acceptor role is filled by Asp-177.

It belongs to the spermidine/spermine synthase family. In terms of assembly, homodimer or homotetramer.

The protein localises to the cytoplasm. It carries out the reaction S-adenosyl 3-(methylsulfanyl)propylamine + putrescine = S-methyl-5'-thioadenosine + spermidine + H(+). Its pathway is amine and polyamine biosynthesis; spermidine biosynthesis; spermidine from putrescine: step 1/1. Catalyzes the irreversible transfer of a propylamine group from the amino donor S-adenosylmethioninamine (decarboxy-AdoMet) to putrescine (1,4-diaminobutane) to yield spermidine. The polypeptide is Polyamine aminopropyltransferase (Korarchaeum cryptofilum (strain OPF8)).